Reading from the N-terminus, the 403-residue chain is MQSIKRTLLLLGAILPAVLGAPVQETRRAAEKLPGKYIVTFKPGIDEAKIQEHTTWATNIHQRSLERRGATGGDLPVGIERNYKINKFAAYAGSFDDATIEEIRKNEDVAYVEEDQIYYLDGLTTQKSAPWGLGSISHKGQQSTDYIYDTSAGEGTYAYVVDSGVNVDHEEFEGRASKAYNAAGGQHVDSIGHGTHVSGTIAGKTYGIAKKASILSVKVFQGESSSTSVILDGFNWAANDIVSKKRTSKAAINMSLGGGYSKAFNDAVENAFEQGVLSVVAAGNENSDAGQTSPASAPDAITVAAIQKSNNRASFSNFGKVVDVFAPGQDILSAWIGSSSATNTISGTSMATPHIVGLSLYLAALENLDGPAAVTKRIKELATKDVVKDVKGSPNLLAYNGNA.

An N-terminal signal peptide occupies residues 1-21 (MQSIKRTLLLLGAILPAVLGA). The propeptide occupies 22–125 (PVQETRRAAE…QIYYLDGLTT (104 aa)). Residues 36-120 (KYIVTFKPGI…YVEEDQIYYL (85 aa)) enclose the Inhibitor I9 domain. The Peptidase S8 domain maps to 130 to 403 (PWGLGSISHK…PNLLAYNGNA (274 aa)). Active-site charge relay system residues include Asp162 and His193. A glycan (N-linked (GlcNAc...) asparagine) is linked at Asn253. Catalysis depends on Ser349, which acts as the Charge relay system.

The protein belongs to the peptidase S8 family.

Its subcellular location is the secreted. The enzyme catalyses Hydrolysis of proteins with broad specificity, and of Bz-Arg-OEt &gt; Ac-Tyr-OEt. Does not hydrolyze peptide amides.. Secreted alkaline protease that allows assimilation of proteinaceous substrates. This Aspergillus flavus (strain ATCC 200026 / FGSC A1120 / IAM 13836 / NRRL 3357 / JCM 12722 / SRRC 167) protein is Alkaline protease 1 (alp1).